Consider the following 119-residue polypeptide: Large ribosomal subunit protein uL22 (119 aa).

It belongs to the universal ribosomal protein uL22 family. Part of the 50S ribosomal subunit.

Its function is as follows. This protein binds specifically to 23S rRNA; its binding is stimulated by other ribosomal proteins, e.g. L4, L17, and L20. It is important during the early stages of 50S assembly. It makes multiple contacts with different domains of the 23S rRNA in the assembled 50S subunit and ribosome. The globular domain of the protein is located near the polypeptide exit tunnel on the outside of the subunit, while an extended beta-hairpin is found that lines the wall of the exit tunnel in the center of the 70S ribosome. In Chlorobium chlorochromatii (strain CaD3), this protein is Large ribosomal subunit protein uL22.